Reading from the N-terminus, the 260-residue chain is Ribonuclease 3 (260 aa).

Residues 1-24 (MAQSSKYQRKPRSGERKRSQRRLE) are disordered. The span at 12 to 24 (RSGERKRSQRRLE) shows a compositional bias: basic and acidic residues. One can recognise an RNase III domain in the interval 33-162 (FDDLLVRTGL…FIGALYMDQG (130 aa)). E75 contributes to the Mg(2+) binding site. The active site involves D79. D148 and E151 together coordinate Mg(2+). E151 is an active-site residue. The DRBM domain maps to 188–257 (DFKSQLQEFV…AKQALLALNQ (70 aa)).

It belongs to the ribonuclease III family. Homodimer. Mg(2+) serves as cofactor.

The protein localises to the cytoplasm. It catalyses the reaction Endonucleolytic cleavage to 5'-phosphomonoester.. Functionally, digests double-stranded RNA. Involved in the processing of primary rRNA transcript to yield the immediate precursors to the large and small rRNAs (23S and 16S). Processes some mRNAs, and tRNAs when they are encoded in the rRNA operon. Processes pre-crRNA and tracrRNA of type II CRISPR loci if present in the organism. This is Ribonuclease 3 from Shouchella clausii (strain KSM-K16) (Alkalihalobacillus clausii).